Consider the following 755-residue polypeptide: MAAPINQPSTTTQITQTGQTTTTTTVGSLGEHSVTTTGSGAAAQTSQTVTLIADHEMQEIASQDGSAVSFSAEHSFSTLPPETGSVGATAQSAQSAGLFSLSGRTQRRDSEISSSSDGSSISRTSSNASSGETSRAESSPDLGDLDSLSGSERAEGAEGPEGPGGLPESTIPHYDPTDKASILNFLKNPAVQQKMQTKGGHFVYVDEARSSFIFVRNGDWSTAESIKVSNAKTKENITKPADLEMCIAKFCVGYETIHSDWTGRVKPTMEERSGATGNYNHLMLSMKFKTAVVYGPWNAKESSSGYTPSAWRRGAKVETGPIWDDVGGLKGINWKTTPAPDFSFINETPGGGAHSTSHTGPGTPVGATVVPNVNVNLGGIKVDLGGINLGGITTNVTTEEGGGTNITSTKSTSTDDKVSITSTGSQSTIEEDTIQFDDPGQGEDDNAIPGTNTPPPPGPPPNLSSSRLLTISNASLNQVLQNVRQHLNTAYDSNGNSVSDLNQDLGQVVKNSENGVNFPTVILPKTTGDTDPSGQATGGVTEGGGHIRNIIQRNTQSTGQSEGATPTPQPTIAKIVTSLRKANVSSSSVLPQPQVATTITPQARTASTSTTSIGTGTESTSTTSTGTGTGSVSTQSTGVGTPTTTTRSTGTSATTTTSSASTQTPQAPLPSGTRHVATISLVRNAAGRSIVLQQGGRSQSFPIPPSGTGTQNMGAQLWAAASQVASTLGQVVNQAATAGSQPSSRRSSPTSPRRK.

Disordered regions lie at residues 1–44, 72–91, 99–174, 393–467, 523–545, 584–672, and 734–755; these read MAAP…AAAQ, AEHS…ATAQ, FSLS…IPHY, TTNV…SSSR, LPKT…EGGG, VSSS…LPSG, and QAAT…PRRK. Composition is skewed to low complexity over residues 10–25 and 35–44; these read TTTQ…TTTT and TTTGSGAAAQ. 3 stretches are compositionally biased toward low complexity: residues 112-130, 139-151, and 393-412; these read ISSS…NASS, SPDL…LSGS, and TTNV…TKST. Positions 429 to 446 are enriched in acidic residues; it reads IEEDTIQFDDPGQGEDDN. Residues 452 to 462 show a composition bias toward pro residues; that stretch reads NTPPPPGPPPN. The segment covering 536-545 has biased composition (gly residues); sequence ATGGVTEGGG. The span at 590–599 shows a compositional bias: polar residues; sequence LPQPQVATTI. Low complexity-rich tracts occupy residues 600–666 and 740–755; these read TPQA…QTPQ and SQPS…PRRK.

This sequence belongs to the chlamydial CPn_0572/CT_456/TC_0741 family.

This is an uncharacterized protein from Chlamydia pneumoniae (Chlamydophila pneumoniae).